The sequence spans 794 residues: DNA mismatch repair protein pms1 (794 aa).

Disordered stretches follow at residues 351–384 (SQIP…SFSY) and 409–442 (GASL…TASS). Positions 352–371 (QIPDSSGDSTDQELPQSIPA) are enriched in polar residues. Basic and acidic residues predominate over residues 419 to 429 (LPERLQKDSMR). Residues 430–442 (RSSPLNEKVTASS) show a composition bias toward polar residues.

This sequence belongs to the DNA mismatch repair MutL/HexB family.

In terms of biological role, this protein is involved in the repair of mismatches in DNA. In Schizosaccharomyces pombe (strain 972 / ATCC 24843) (Fission yeast), this protein is DNA mismatch repair protein pms1 (pms1).